Reading from the N-terminus, the 523-residue chain is Protein nucleotidyltransferase YdiU (523 aa).

ATP-binding residues include Gly-101, Gly-103, Arg-104, Lys-128, Asp-140, Gly-141, Arg-198, and Arg-205. Asp-275 functions as the Proton acceptor in the catalytic mechanism. Positions 276 and 285 each coordinate Mg(2+). Asp-285 contacts ATP.

Belongs to the SELO family. It depends on Mg(2+) as a cofactor. Mn(2+) serves as cofactor.

The catalysed reaction is L-seryl-[protein] + ATP = 3-O-(5'-adenylyl)-L-seryl-[protein] + diphosphate. It carries out the reaction L-threonyl-[protein] + ATP = 3-O-(5'-adenylyl)-L-threonyl-[protein] + diphosphate. The enzyme catalyses L-tyrosyl-[protein] + ATP = O-(5'-adenylyl)-L-tyrosyl-[protein] + diphosphate. It catalyses the reaction L-histidyl-[protein] + UTP = N(tele)-(5'-uridylyl)-L-histidyl-[protein] + diphosphate. The catalysed reaction is L-seryl-[protein] + UTP = O-(5'-uridylyl)-L-seryl-[protein] + diphosphate. It carries out the reaction L-tyrosyl-[protein] + UTP = O-(5'-uridylyl)-L-tyrosyl-[protein] + diphosphate. Its function is as follows. Nucleotidyltransferase involved in the post-translational modification of proteins. It can catalyze the addition of adenosine monophosphate (AMP) or uridine monophosphate (UMP) to a protein, resulting in modifications known as AMPylation and UMPylation. The chain is Protein nucleotidyltransferase YdiU from Aromatoleum aromaticum (strain DSM 19018 / LMG 30748 / EbN1) (Azoarcus sp. (strain EbN1)).